The sequence spans 373 residues: Chaperone protein DnaJ (373 aa).

In terms of domain architecture, J spans 5 to 70; the sequence is CYYEVLEVSR…EKRSRYDRFG (66 aa). A CR-type zinc finger spans residues 134–212; it reads GTEVELNIPV…CRGAGYVRKQ (79 aa). Residues Cys-147, Cys-150, Cys-164, Cys-167, Cys-186, Cys-189, Cys-200, and Cys-203 each contribute to the Zn(2+) site. CXXCXGXG motif repeat units lie at residues 147-154, 164-171, 186-193, and 200-207; these read CDTCEGSG, CSHCGGRG, CPACNGRG, and CSECRGAG.

Belongs to the DnaJ family. As to quaternary structure, homodimer. It depends on Zn(2+) as a cofactor.

It is found in the cytoplasm. Its function is as follows. Participates actively in the response to hyperosmotic and heat shock by preventing the aggregation of stress-denatured proteins and by disaggregating proteins, also in an autonomous, DnaK-independent fashion. Unfolded proteins bind initially to DnaJ; upon interaction with the DnaJ-bound protein, DnaK hydrolyzes its bound ATP, resulting in the formation of a stable complex. GrpE releases ADP from DnaK; ATP binding to DnaK triggers the release of the substrate protein, thus completing the reaction cycle. Several rounds of ATP-dependent interactions between DnaJ, DnaK and GrpE are required for fully efficient folding. Also involved, together with DnaK and GrpE, in the DNA replication of plasmids through activation of initiation proteins. The chain is Chaperone protein DnaJ from Maridesulfovibrio salexigens (strain ATCC 14822 / DSM 2638 / NCIMB 8403 / VKM B-1763) (Desulfovibrio salexigens).